We begin with the raw amino-acid sequence, 272 residues long: HMP-PP phosphatase (272 aa).

Asp-8 serves as the catalytic Nucleophile. Asp-8, Asp-10, and Asp-212 together coordinate Mg(2+).

Belongs to the HAD-like hydrolase superfamily. Cof family. Mg(2+) is required as a cofactor.

The catalysed reaction is 4-amino-2-methyl-5-(diphosphooxymethyl)pyrimidine + H2O = 4-amino-2-methyl-5-(phosphooxymethyl)pyrimidine + phosphate + H(+). Catalyzes the hydrolysis of 4-amino-2-methyl-5-hydroxymethylpyrimidine pyrophosphate (HMP-PP) to 4-amino-2-methyl-5-hydroxymethylpyrimidine phosphate (HMP-P). This Escherichia coli (strain K12 / MC4100 / BW2952) protein is HMP-PP phosphatase.